The sequence spans 538 residues: MAAEQDPEGRAAARPLLTDLYQATMALGYWRAGRAQDQAEFELFFRQCPFGGAFALAAGLRDCVRFLRAFRLRDADVQFLASALPPDTDPAFFEHLRALDCSGVTVRALPEGSLAFPGVPLLQVSGPLLVVQLLETPLLCLVSYASLIATNAARLRLIAGPDKRLLEMGLRRAQGPDGGLTASTYSYLGGFDASSNVLAGQLRGVPVAGTLAHSFVTSFSGSEVPPDPMLAPAAGQGSQVDLAASVEMWLERVCGHLGLGVQEPHRGERAAFVAYALAFPRAFQGLLDTYSVRRSGLPNFLAVALALQELGYQAVGVRLDSGDLLQQAREIRGVFRTAAAQFGVPWLQSVPIAVSNNIDEEELARLAQKGSEVNVIGIGTSVVTCPRQPSLGCVYKLVSVGGQPRMKLTEDPEKQTLPGSKAAFRLLGSDGSLLLDVLQLAEEPPPQAGQELRVWPRGARESRTVRPAHVEPLLRLWVQQGQLCEPLPSLAESRAFAQQSLHRLSPAHRRLEQPALYQVALSEKLQALVDRLSARGAL.

Nicotinate-binding residues include tyrosine 21 and threonine 210. Histidine 213 carries the phosphohistidine modification. Residue arginine 318 participates in nicotinate binding. Threonine 380 lines the 5-phospho-alpha-D-ribose 1-diphosphate pocket.

This sequence belongs to the NAPRTase family. Homodimer. It depends on Mg(2+) as a cofactor. Mn(2+) serves as cofactor. Transiently phosphorylated on a His residue during the reaction cycle. Phosphorylation strongly increases the affinity for substrates and increases the rate of nicotinate D-ribonucleotide production. Dephosphorylation regenerates the low-affinity form of the enzyme, leading to product release.

The protein localises to the cytoplasm. It localises to the cytosol. The catalysed reaction is nicotinate + 5-phospho-alpha-D-ribose 1-diphosphate + ATP + H2O = nicotinate beta-D-ribonucleotide + ADP + phosphate + diphosphate. Its pathway is cofactor biosynthesis; NAD(+) biosynthesis; nicotinate D-ribonucleotide from nicotinate: step 1/1. Its function is as follows. Catalyzes the first step in the biosynthesis of NAD from nicotinic acid, the ATP-dependent synthesis of beta-nicotinate D-ribonucleotide from nicotinate and 5-phospho-D-ribose 1-phosphate. Helps prevent cellular oxidative stress via its role in NAD biosynthesis. In Bos taurus (Bovine), this protein is Nicotinate phosphoribosyltransferase (NAPRT).